Here is a 151-residue protein sequence, read N- to C-terminus: Protein A151R (151 aa).

The protein belongs to the asfivirus A151R family. As to quaternary structure, monomer. Homodimer. Interacts with protein B119L. Interacts with membrane protein E248R. Requires Zn(2+) as cofactor.

Its function is as follows. May participate in a redox cascade for the formation of disulfide bonds in viral proteins. In Ornithodoros (relapsing fever ticks), this protein is Protein A151R.